The primary structure comprises 95 residues: Integration host factor subunit beta (95 aa).

This sequence belongs to the bacterial histone-like protein family. As to quaternary structure, heterodimer of an alpha and a beta chain.

This protein is one of the two subunits of integration host factor, a specific DNA-binding protein that functions in genetic recombination as well as in transcriptional and translational control. The chain is Integration host factor subunit beta from Shewanella pealeana (strain ATCC 700345 / ANG-SQ1).